A 149-amino-acid polypeptide reads, in one-letter code: Ribosome maturation factor RimP (149 aa).

It belongs to the RimP family.

It is found in the cytoplasm. In terms of biological role, required for maturation of 30S ribosomal subunits. The chain is Ribosome maturation factor RimP from Neisseria gonorrhoeae (strain NCCP11945).